The chain runs to 176 residues: Ribosome maturation factor RimM (176 aa).

The 74-residue stretch at 100-173 (EGEFHLLDLV…WLRLTPPPGL (74 aa)) folds into the PRC barrel domain.

This sequence belongs to the RimM family. As to quaternary structure, binds ribosomal protein uS19.

It localises to the cytoplasm. Functionally, an accessory protein needed during the final step in the assembly of 30S ribosomal subunit, possibly for assembly of the head region. Essential for efficient processing of 16S rRNA. May be needed both before and after RbfA during the maturation of 16S rRNA. It has affinity for free ribosomal 30S subunits but not for 70S ribosomes. In Prochlorococcus marinus (strain MIT 9303), this protein is Ribosome maturation factor RimM.